We begin with the raw amino-acid sequence, 391 residues long: Protein-glutamate methylesterase/protein-glutamine glutaminase of group 2 operon (391 aa).

Residues 20-138 (RVMIVDDSVV…EPQAADIFKH (119 aa)) enclose the Response regulatory domain. Asp-71 carries the 4-aspartylphosphate modification. One can recognise a CheB-type methylesterase domain in the interval 196–383 (PTAPRVLLIG…PLNQIGPKVV (188 aa)). Active-site residues include Ser-207, His-235, and Asp-331.

Belongs to the CheB family. Post-translationally, phosphorylated by CheA. Phosphorylation of the N-terminal regulatory domain activates the methylesterase activity.

It localises to the cytoplasm. The catalysed reaction is [protein]-L-glutamate 5-O-methyl ester + H2O = L-glutamyl-[protein] + methanol + H(+). It carries out the reaction L-glutaminyl-[protein] + H2O = L-glutamyl-[protein] + NH4(+). Functionally, involved in chemotaxis. Part of a chemotaxis signal transduction system that modulates chemotaxis in response to various stimuli. Catalyzes the demethylation of specific methylglutamate residues introduced into the chemoreceptors (methyl-accepting chemotaxis proteins or MCP) by CheR. Also mediates the irreversible deamidation of specific glutamine residues to glutamic acid. The sequence is that of Protein-glutamate methylesterase/protein-glutamine glutaminase of group 2 operon from Rhodopseudomonas palustris (strain ATCC BAA-98 / CGA009).